A 153-amino-acid chain; its full sequence is Aspartate carbamoyltransferase regulatory chain (153 aa).

Zn(2+)-binding residues include cysteine 109, cysteine 114, cysteine 138, and cysteine 141.

Belongs to the PyrI family. Contains catalytic and regulatory chains. Requires Zn(2+) as cofactor.

Its function is as follows. Involved in allosteric regulation of aspartate carbamoyltransferase. The chain is Aspartate carbamoyltransferase regulatory chain from Klebsiella pneumoniae subsp. pneumoniae (strain ATCC 700721 / MGH 78578).